The chain runs to 476 residues: MFSHLLKPAARSAGLLGHVNRRYLATVHTNTAREIPKPSRKPTPISLENATFTIKNGPIFSGKSFGAKANISGEAVFTTSLVGYPESMTDPSYRGQILVFTQPLIGNYGVPSSARDEHGLLRYFESPNIQASGIVVQDYALKHSHWTAVESLAQWCAREGVPAISGVDTREVVTYLREQGSSLARITVGEEYDADEDEAYIDPEAINLVRRVSTKAPFHVSSSLGDMHVALIDCGVKENILRSLVSRGASVTCFPFDYPIHKVAHHFDGVFISNGPGDPTHCTSTVYNLRKLFETSQLPVMGICMGHQLIALAAGAKTIKLKYGNRAHNIPALDLTTGKCHITSQNHGYAVDPTTLTSEWKEYFTNLNDQSNEGLIHASRPIFSAQFHPEAKGGPMDSSYLFDKYIQNVQRYKDHQSSFSEKSNKPSPLLVDLLSKERVGVHPAQPDFEMHVPGRVEQVDVGGPVAPPYQPITAAA.

Residues 1 to 24 (MFSHLLKPAARSAGLLGHVNRRYL) constitute a mitochondrion transit peptide. One can recognise a Glutamine amidotransferase type-1 domain in the interval 228 to 415 (HVALIDCGVK…IQNVQRYKDH (188 aa)). The active-site Nucleophile is cysteine 304. Residues histidine 388 and glutamate 390 contribute to the active site.

Belongs to the CarA family. Heterodimer composed of 2 chains; the small (or glutamine) chain promotes the hydrolysis of glutamine to ammonia, which is used by the large (or ammonia) chain to synthesize carbamoyl phosphate.

It is found in the mitochondrion matrix. It catalyses the reaction hydrogencarbonate + L-glutamine + 2 ATP + H2O = carbamoyl phosphate + L-glutamate + 2 ADP + phosphate + 2 H(+). The enzyme catalyses L-glutamine + H2O = L-glutamate + NH4(+). Its pathway is amino-acid biosynthesis; L-arginine biosynthesis; carbamoyl phosphate from bicarbonate: step 1/1. In terms of biological role, small subunit of the arginine-specific carbamoyl phosphate synthase (CPSase). CPSase catalyzes the formation of carbamoyl phosphate from the ammonia moiety of glutamine, carbonate, and phosphate donated by ATP, the first step of the arginine biosynthetic pathway. The small subunit (glutamine amidotransferase) binds and cleaves glutamine to supply the large subunit with the substrate ammonia. The sequence is that of Carbamoyl phosphate synthase arginine-specific small chain (CPA1) from Phaeosphaeria nodorum (strain SN15 / ATCC MYA-4574 / FGSC 10173) (Glume blotch fungus).